Consider the following 391-residue polypeptide: GTPase Obg (391 aa).

Positions 1 to 159 (MKFVDEASIL…RDLLLELMLL (159 aa)) constitute an Obg domain. The interval 127–147 (NTRFKSSVNRTPRQKTNGTPG) is disordered. A compositionally biased stretch (polar residues) spans 129-145 (RFKSSVNRTPRQKTNGT). In terms of domain architecture, OBG-type G spans 160-333 (ADVGMLGMPN…LCWDVMTFII (174 aa)). GTP contacts are provided by residues 166 to 173 (GMPNAGKS), 191 to 195 (FTTLV), 213 to 216 (DIPG), 283 to 286 (NKID), and 314 to 316 (SAA). Mg(2+) is bound by residues S173 and T193.

Belongs to the TRAFAC class OBG-HflX-like GTPase superfamily. OBG GTPase family. As to quaternary structure, monomer. Mg(2+) serves as cofactor.

The protein resides in the cytoplasm. Its function is as follows. An essential GTPase which binds GTP, GDP and possibly (p)ppGpp with moderate affinity, with high nucleotide exchange rates and a fairly low GTP hydrolysis rate. Plays a role in control of the cell cycle, stress response, ribosome biogenesis and in those bacteria that undergo differentiation, in morphogenesis control. This Salmonella arizonae (strain ATCC BAA-731 / CDC346-86 / RSK2980) protein is GTPase Obg.